The sequence spans 198 residues: Septum-promoting GTP-binding protein 1 (198 aa).

A small GTPase-like region spans residues 6 to 198; that stretch reads KNNVTIKVGM…GDPILEYIDR (193 aa). Residues 17–24, 65–69, and 122–125 contribute to the GTP site; these read GDSSIGKT, DLGGQ, and TKYD.

As to quaternary structure, interacts with cdc7 and cdc11.

Functionally, GTP-binding protein essential for the induction of septum formation at G2 and pre-START stages of mitosis. Acts via the cdc7 protein kinase pathway. This is Septum-promoting GTP-binding protein 1 (spg1) from Schizosaccharomyces pombe (strain 972 / ATCC 24843) (Fission yeast).